A 239-amino-acid polypeptide reads, in one-letter code: tRNA1(Val) (adenine(37)-N6)-methyltransferase (239 aa).

The protein belongs to the methyltransferase superfamily. tRNA (adenine-N(6)-)-methyltransferase family.

The protein resides in the cytoplasm. It carries out the reaction adenosine(37) in tRNA1(Val) + S-adenosyl-L-methionine = N(6)-methyladenosine(37) in tRNA1(Val) + S-adenosyl-L-homocysteine + H(+). Its function is as follows. Specifically methylates the adenine in position 37 of tRNA(1)(Val) (anticodon cmo5UAC). The chain is tRNA1(Val) (adenine(37)-N6)-methyltransferase from Trichodesmium erythraeum (strain IMS101).